A 254-amino-acid chain; its full sequence is UDP-2,3-diacylglucosamine hydrolase (254 aa).

Mn(2+) contacts are provided by Asp-8, His-10, Asp-41, Asn-79, and His-114. 79–80 provides a ligand contact to substrate; it reads NR. 5 residues coordinate substrate: Asp-122, Ser-160, Asn-164, Lys-167, and His-195. Positions 195 and 197 each coordinate Mn(2+).

It belongs to the LpxH family. Mn(2+) serves as cofactor.

It is found in the cell inner membrane. The enzyme catalyses UDP-2-N,3-O-bis[(3R)-3-hydroxytetradecanoyl]-alpha-D-glucosamine + H2O = 2-N,3-O-bis[(3R)-3-hydroxytetradecanoyl]-alpha-D-glucosaminyl 1-phosphate + UMP + 2 H(+). The protein operates within glycolipid biosynthesis; lipid IV(A) biosynthesis; lipid IV(A) from (3R)-3-hydroxytetradecanoyl-[acyl-carrier-protein] and UDP-N-acetyl-alpha-D-glucosamine: step 4/6. Functionally, hydrolyzes the pyrophosphate bond of UDP-2,3-diacylglucosamine to yield 2,3-diacylglucosamine 1-phosphate (lipid X) and UMP by catalyzing the attack of water at the alpha-P atom. Involved in the biosynthesis of lipid A, a phosphorylated glycolipid that anchors the lipopolysaccharide to the outer membrane of the cell. This chain is UDP-2,3-diacylglucosamine hydrolase, found in Aeromonas salmonicida (strain A449).